Here is a 104-residue protein sequence, read N- to C-terminus: Pyrimidine/purine nucleoside phosphorylase (104 aa).

This sequence belongs to the nucleoside phosphorylase PpnP family.

It catalyses the reaction a purine D-ribonucleoside + phosphate = a purine nucleobase + alpha-D-ribose 1-phosphate. The catalysed reaction is adenosine + phosphate = alpha-D-ribose 1-phosphate + adenine. It carries out the reaction cytidine + phosphate = cytosine + alpha-D-ribose 1-phosphate. The enzyme catalyses guanosine + phosphate = alpha-D-ribose 1-phosphate + guanine. It catalyses the reaction inosine + phosphate = alpha-D-ribose 1-phosphate + hypoxanthine. The catalysed reaction is thymidine + phosphate = 2-deoxy-alpha-D-ribose 1-phosphate + thymine. It carries out the reaction uridine + phosphate = alpha-D-ribose 1-phosphate + uracil. The enzyme catalyses xanthosine + phosphate = alpha-D-ribose 1-phosphate + xanthine. Catalyzes the phosphorolysis of diverse nucleosides, yielding D-ribose 1-phosphate and the respective free bases. Can use uridine, adenosine, guanosine, cytidine, thymidine, inosine and xanthosine as substrates. Also catalyzes the reverse reactions. The protein is Pyrimidine/purine nucleoside phosphorylase of Leptothrix cholodnii (strain ATCC 51168 / LMG 8142 / SP-6) (Leptothrix discophora (strain SP-6)).